A 231-amino-acid polypeptide reads, in one-letter code: Dephospho-CoA kinase domain-containing protein (231 aa).

The 205-residue stretch at 3–207 folds into the DPCK domain; it reads LVGLTGGIAS…RSLEYLPLRF (205 aa). Position 8–15 (8–15) interacts with ATP; sequence GGIASGKS.

This sequence belongs to the CoaE family.

The sequence is that of Dephospho-CoA kinase domain-containing protein (DCAKD) from Homo sapiens (Human).